The primary structure comprises 839 residues: Eukaryotic translation initiation factor 3 subunit C (839 aa).

Residues 1-93 (MSRFFVAGYN…DSDSEDEGRR (93 aa)) form a disordered region. Composition is skewed to acidic residues over residues 14–27 (SSEE…DEEL) and 34–58 (GEQE…SDSD). One can recognise a PCI domain in the interval 585–759 (FHQHINLELL…AFIQFASTEP (175 aa)). Residues 783 to 839 (EKTSSNGYGKKQPQQQQQQQQQQQQQQQQQKDLLQEDNSRFRYANVNTNNDEFQTTA) form a disordered region. A compositionally biased stretch (low complexity) spans 794–812 (QPQQQQQQQQQQQQQQQQQ). Positions 827–839 (NVNTNNDEFQTTA) are enriched in polar residues.

Belongs to the eIF-3 subunit C family. In terms of assembly, component of the eukaryotic translation initiation factor 3 (eIF-3) complex.

The protein resides in the cytoplasm. Component of the eukaryotic translation initiation factor 3 (eIF-3) complex, which is involved in protein synthesis of a specialized repertoire of mRNAs and, together with other initiation factors, stimulates binding of mRNA and methionyl-tRNAi to the 40S ribosome. The eIF-3 complex specifically targets and initiates translation of a subset of mRNAs involved in cell proliferation. The sequence is that of Eukaryotic translation initiation factor 3 subunit C from Scheffersomyces stipitis (strain ATCC 58785 / CBS 6054 / NBRC 10063 / NRRL Y-11545) (Yeast).